The sequence spans 324 residues: UDP-N-acetylenolpyruvoylglucosamine reductase (324 aa).

One can recognise an FAD-binding PCMH-type domain in the interval 36–217 (FRAGGLAELM…IRAEMDAVRA (182 aa)). Arg183 is an active-site residue. Ser232 serves as the catalytic Proton donor. Residue Glu302 is part of the active site.

The protein belongs to the MurB family. Requires FAD as cofactor.

It localises to the cytoplasm. The catalysed reaction is UDP-N-acetyl-alpha-D-muramate + NADP(+) = UDP-N-acetyl-3-O-(1-carboxyvinyl)-alpha-D-glucosamine + NADPH + H(+). Its pathway is cell wall biogenesis; peptidoglycan biosynthesis. Its function is as follows. Cell wall formation. The sequence is that of UDP-N-acetylenolpyruvoylglucosamine reductase from Rhizobium rhizogenes (strain K84 / ATCC BAA-868) (Agrobacterium radiobacter).